Consider the following 388-residue polypeptide: MGRTHLFTSESVTEGHPDKVADCISDAVLDALISQDKNCRVACETLVTTGVAFIAGEITANATVNFPDIVRDTIRRIGYTSSDMGFDWQTCSVVTSIDKQSPDIAQGVNEGDGLFKEQGAGDQGLMFGFACDETPELMPAPISYAHKLTKQLADVRKNGVLDFLRPDGKSQVTVQYEDGQPKRIDTIVISSQHSPDVTYDELKDRIIAEVILPVIPGELLDEQTKYFINPTGRFVVGGPMGDCGLTGRKIIVDTYGGMGRHGGGCFSGKDPSKVDRSASYMGRHVAKNIVAAGIAKRCEVQVAYAIGVAQPVSVMVDLMGTGRIPEADAERIVREVFDLRPAAIIDYLDLKRPIYGPTAAYGHFGRTGDSFPWESTRRADEIRGKAGI.

H16 serves as a coordination point for ATP. D18 lines the Mg(2+) pocket. A K(+)-binding site is contributed by E44. E57 and Q100 together coordinate L-methionine. Positions 100–110 (QSPDIAQGVNE) are flexible loop. ATP-binding positions include 167–169 (DGK), 233–234 (RF), D242, 248–249 (RK), and K269. D242 serves as a coordination point for L-methionine. Residue K273 coordinates L-methionine.

The protein belongs to the AdoMet synthase family. Homotetramer; dimer of dimers. Mg(2+) serves as cofactor. Requires K(+) as cofactor.

The protein resides in the cytoplasm. The catalysed reaction is L-methionine + ATP + H2O = S-adenosyl-L-methionine + phosphate + diphosphate. It functions in the pathway amino-acid biosynthesis; S-adenosyl-L-methionine biosynthesis; S-adenosyl-L-methionine from L-methionine: step 1/1. Catalyzes the formation of S-adenosylmethionine (AdoMet) from methionine and ATP. The overall synthetic reaction is composed of two sequential steps, AdoMet formation and the subsequent tripolyphosphate hydrolysis which occurs prior to release of AdoMet from the enzyme. This is S-adenosylmethionine synthase from Desulfosudis oleivorans (strain DSM 6200 / JCM 39069 / Hxd3) (Desulfococcus oleovorans).